We begin with the raw amino-acid sequence, 247 residues long: tRNA (guanine-N(1)-)-methyltransferase (247 aa).

Residue Gly126 participates in S-adenosyl-L-methionine binding.

This sequence belongs to the RNA methyltransferase TrmD family. As to quaternary structure, homodimer.

It is found in the cytoplasm. It carries out the reaction guanosine(37) in tRNA + S-adenosyl-L-methionine = N(1)-methylguanosine(37) in tRNA + S-adenosyl-L-homocysteine + H(+). Specifically methylates guanosine-37 in various tRNAs. In Jannaschia sp. (strain CCS1), this protein is tRNA (guanine-N(1)-)-methyltransferase.